The chain runs to 385 residues: Heterogeneous nuclear ribonucleoprotein 87F (385 aa).

2 consecutive RRM domains span residues 24 to 101 (RKLF…RAVP) and 115 to 192 (KKLF…KAIA). 2 disordered regions span residues 192–289 (AKQD…WNGG) and 305–385 (GNGG…NRRY). 2 stretches are compositionally biased toward gly residues: residues 199–289 (QGGG…WNGG) and 305–317 (GNGGGGGGGGGFG). The segment covering 319-336 (EYQQSYGGGPQRNSNFGN) has biased composition (polar residues). Composition is skewed to gly residues over residues 344 to 362 (QGGGGGGFNKGNQGGGQGF) and 369 to 385 (TGGGGQGGNMGGGNRRY).

It is found in the nucleus. Its subcellular location is the cytoplasm. In terms of biological role, this protein is a component of ribonucleosomes. Could be needed to organize a concentration gradient of a dorsalizing morphogen (Dm) originating in the germinal vesicle. This Drosophila melanogaster (Fruit fly) protein is Heterogeneous nuclear ribonucleoprotein 87F (Hrb87F).